The chain runs to 122 residues: MIQQESRLRVADNTGAREILCIRVLGGSTRRFAGIGDVIVATVKEATPGGNVKAGDIVKAVIVRAKKETRRPDGSYIRFDENAAVLIRNDNEPRGTRIFGPVARELRDKKFMKIVSLAPEVL.

It belongs to the universal ribosomal protein uL14 family. In terms of assembly, part of the 50S ribosomal subunit. Forms a cluster with proteins L3 and L19. In the 70S ribosome, L14 and L19 interact and together make contacts with the 16S rRNA in bridges B5 and B8.

Binds to 23S rRNA. Forms part of two intersubunit bridges in the 70S ribosome. In Corynebacterium kroppenstedtii (strain DSM 44385 / JCM 11950 / CIP 105744 / CCUG 35717), this protein is Large ribosomal subunit protein uL14.